Consider the following 217-residue polypeptide: Homeobox protein Hox-B7 (217 aa).

Residues 126–131 carry the Antp-type hexapeptide motif; sequence IYPWMR. Residues 137–196 constitute a DNA-binding region (homeobox); it reads RKRGRQTYTRYQTLELEKEFHYNRYLTRRRRIEIAHTLCLTERQIKIWFQNRRMKWKKEN. The segment at 192–217 is disordered; sequence WKKENKTSGPGTTGQDKAEAEEEEEE.

The protein belongs to the Antp homeobox family. Forms a DNA-binding heterodimer with transcription factor PBX1.

It is found in the nucleus. Functionally, sequence-specific transcription factor which is part of a developmental regulatory system that provides cells with specific positional identities on the anterior-posterior axis. In Mus musculus (Mouse), this protein is Homeobox protein Hox-B7 (Hoxb7).